Consider the following 60-residue polypeptide: Single-pass membrane and coiled-coil domain-containing protein 4 homolog (60 aa).

The segment at 1 to 22 is disordered; it reads MRKLRGGQTRETRKQKQERREE. The segment covering 8–22 has biased composition (basic and acidic residues); the sequence is QTRETRKQKQERREE. Residues 8–34 adopt a coiled-coil conformation; the sequence is QTRETRKQKQERREENQKIQQQLKTIV. A helical membrane pass occupies residues 30-50; the sequence is LKTIVLPICGVVFLCIVAYVF.

It belongs to the SMCO4 family.

It localises to the membrane. This is Single-pass membrane and coiled-coil domain-containing protein 4 homolog from Culex quinquefasciatus (Southern house mosquito).